The following is a 551-amino-acid chain: Harmonin (551 aa).

Residues 1–86 form an N-terminal domain region; the sequence is MDRKVAREFR…LTPRRSRKLK (86 aa). 2 consecutive PDZ domains span residues 87-169 and 211-293; these read EVRL…HIGL and KVFI…AGAG. The mediates interaction with MYO7B stretch occupies residues 194–532; that stretch reads GGRSSLGSPG…QKAWNQGDWI (339 aa). S219 bears the Phosphoserine mark. The stretch at 318 to 377 forms a coiled coil; it reads LMQKRLAMESNKILQEQQEMERQRKKEIAQKAAEENERYRKEMEQIVEEEEKFRKQWEED. The disordered stretch occupies residues 401 to 425; that stretch reads KPKYDLGVDPEFDPADDLDGGTNKR. Positions 408–419 are enriched in acidic residues; the sequence is VDPEFDPADDLD. The PDZ 3 domain maps to 452 to 536; the sequence is DVRLLRVKKE…NQGDWIDLVV (85 aa).

Part of the IMAC/intermicrovillar adhesion complex/intermicrovillar tip-link complex composed of ANKS4B, MYO7B, USH1C, CDHR2 and CDHR5. Part of a complex composed of USH1C, USH1G and MYO7A. Interacts with F-actin. Interacts with USH2A. Interacts with SLC4A7. Interacts (via PDZ1 domain) with the C-terminus of USHBP1. Interacts (via N-terminus and PDZ 2 domain) with CDH23. Interacts with USH1G. Interacts with MYO7B. Interacts with CDHR2 and CDHR5; may mediate their interaction with MYO7B at the microvilli tip. Interacts (via PDZ 1 domain) with ANKS4B. Interacts (via PDZ 1 domain) with DOCK4.

The protein localises to the cytoplasm. Its subcellular location is the cytosol. It is found in the cytoskeleton. It localises to the cell projection. The protein resides in the microvillus. In terms of biological role, anchoring/scaffolding protein that is a part of the functional network formed by USH1C, USH1G, CDH23 and MYO7A that mediates mechanotransduction in cochlear hair cells. Required for normal development and maintenance of cochlear hair cell bundles. As part of the intermicrovillar adhesion complex/IMAC plays a role in brush border differentiation, controlling microvilli organization and length. Probably plays a central regulatory role in the assembly of the complex, recruiting CDHR2, CDHR5 and MYO7B to the microvilli tips. The polypeptide is Harmonin (USH1C) (Bos taurus (Bovine)).